Reading from the N-terminus, the 612-residue chain is Dihydroxy-acid dehydratase (612 aa).

Asp-81 provides a ligand contact to Mg(2+). Cys-122 lines the [2Fe-2S] cluster pocket. Residues Asp-123 and Lys-124 each coordinate Mg(2+). Lys-124 bears the N6-carboxylysine mark. Cys-195 lines the [2Fe-2S] cluster pocket. Glu-491 provides a ligand contact to Mg(2+). The Proton acceptor role is filled by Ser-517.

The protein belongs to the IlvD/Edd family. Homodimer. [2Fe-2S] cluster is required as a cofactor. It depends on Mg(2+) as a cofactor.

It carries out the reaction (2R)-2,3-dihydroxy-3-methylbutanoate = 3-methyl-2-oxobutanoate + H2O. It catalyses the reaction (2R,3R)-2,3-dihydroxy-3-methylpentanoate = (S)-3-methyl-2-oxopentanoate + H2O. The protein operates within amino-acid biosynthesis; L-isoleucine biosynthesis; L-isoleucine from 2-oxobutanoate: step 3/4. Its pathway is amino-acid biosynthesis; L-valine biosynthesis; L-valine from pyruvate: step 3/4. Functionally, functions in the biosynthesis of branched-chain amino acids. Catalyzes the dehydration of (2R,3R)-2,3-dihydroxy-3-methylpentanoate (2,3-dihydroxy-3-methylvalerate) into 2-oxo-3-methylpentanoate (2-oxo-3-methylvalerate) and of (2R)-2,3-dihydroxy-3-methylbutanoate (2,3-dihydroxyisovalerate) into 2-oxo-3-methylbutanoate (2-oxoisovalerate), the penultimate precursor to L-isoleucine and L-valine, respectively. The sequence is that of Dihydroxy-acid dehydratase from Psychromonas ingrahamii (strain DSM 17664 / CCUG 51855 / 37).